Reading from the N-terminus, the 459-residue chain is UDP-N-acetylmuramoylalanine--D-glutamate ligase (459 aa).

119–125 provides a ligand contact to ATP; sequence GTNGKTT.

The protein belongs to the MurCDEF family.

The protein localises to the cytoplasm. The enzyme catalyses UDP-N-acetyl-alpha-D-muramoyl-L-alanine + D-glutamate + ATP = UDP-N-acetyl-alpha-D-muramoyl-L-alanyl-D-glutamate + ADP + phosphate + H(+). The protein operates within cell wall biogenesis; peptidoglycan biosynthesis. Functionally, cell wall formation. Catalyzes the addition of glutamate to the nucleotide precursor UDP-N-acetylmuramoyl-L-alanine (UMA). This Lactiplantibacillus plantarum (strain ATCC BAA-793 / NCIMB 8826 / WCFS1) (Lactobacillus plantarum) protein is UDP-N-acetylmuramoylalanine--D-glutamate ligase.